A 309-amino-acid polypeptide reads, in one-letter code: Taste receptor type 2 member 46 (309 aa).

A topological domain (extracellular) is located at residue M1. A helical membrane pass occupies residues I2–F22. Residues A23–Q46 lie on the Cytoplasmic side of the membrane. The helical transmembrane segment at I47–Y67 threads the bilayer. Residues A68 to N86 lie on the Extracellular side of the membrane. A helical membrane pass occupies residues V87–L107. Residues L108 to K126 lie on the Cytoplasmic side of the membrane. Residues S127–M147 form a helical membrane-spanning segment. The Extracellular portion of the chain corresponds to N148–T178. N-linked (GlcNAc...) asparagine glycosylation is found at N161 and N176. Residues V179 to I199 traverse the membrane as a helical segment. At C200–Q229 the chain is on the cytoplasmic side. The helical transmembrane segment at I230–W250 threads the bilayer. The Extracellular portion of the chain corresponds to N251–P259. The helical transmembrane segment at F260–I280 threads the bilayer. Topologically, residues W281 to P309 are cytoplasmic.

The protein belongs to the G-protein coupled receptor T2R family.

Its subcellular location is the membrane. The protein localises to the cell projection. The protein resides in the cilium membrane. In terms of biological role, receptor that may play a role in the perception of bitterness and is gustducin-linked. May play a role in sensing the chemical composition of the gastrointestinal content. The activity of this receptor may stimulate alpha gustducin, mediate PLC-beta-2 activation and lead to the gating of TRPM5. In airway epithelial cells, binding of bitter compounds increases the intracellular calcium ion concentration and stimulates ciliary beat frequency. This chain is Taste receptor type 2 member 46 (TAS2R46), found in Papio hamadryas (Hamadryas baboon).